Consider the following 263-residue polypeptide: Cell division coordinator CpoB (263 aa).

Positions 1–26 (MSSNFRHQLLSLSLLVGIAAPWAAFA) are cleaved as a signal peptide. Positions 44–88 (QLERISNAHSQLLTQLQQQLSDNQSDIDSLRGQIQENQYQLNQVV) form a coiled coil. Residues 106–123 (AAAQSTSGDQSGAAASTT) show a composition bias toward low complexity. Residues 106-139 (AAAQSTSGDQSGAAASTTPTADAGTANAGAPVKS) form a disordered region. TPR repeat units follow at residues 143–176 (NTDY…YPDS), 180–213 (PNAN…YPKS), and 217–250 (ADAM…YPGT).

It belongs to the CpoB family. As to quaternary structure, homotrimer. Interacts directly with the central domain of TolA and with PBP1B. Binding to TolA disrupts the homotrimer to form a YbgF/TolA heterodimer with weak affinity. Forms a quaternary complex with PBP1B-LpoB and TolA.

The protein resides in the periplasm. Mediates coordination of peptidoglycan synthesis and outer membrane constriction during cell division. Promotes physical and functional coordination of the PBP1B-LpoB and Tol machines, and regulates PBP1B activity in response to Tol energy state. The chain is Cell division coordinator CpoB from Escherichia coli (strain K12).